Here is a 252-residue protein sequence, read N- to C-terminus: Ribosome maturation factor RimP (252 aa).

The tract at residues 188 to 252 (QGAAPGTEGG…PAAGPGAQDE (65 aa)) is disordered. Residues 208-224 (ARRPHQPKPKKAKKKGP) are compositionally biased toward basic residues.

Belongs to the RimP family.

The protein localises to the cytoplasm. Functionally, required for maturation of 30S ribosomal subunits. The polypeptide is Ribosome maturation factor RimP (Rhodospirillum centenum (strain ATCC 51521 / SW)).